The chain runs to 37 residues: ECKTNKMSCSLHEECCRFRCCFHGKCQTSVFGCWVDP.

Cystine bridges form between cysteine 2-cysteine 16, cysteine 9-cysteine 21, cysteine 15-cysteine 26, and cysteine 20-cysteine 33. 2 positions are modified to 4-carboxyglutamate: glutamate 13 and glutamate 14. Tryptophan 34 carries the 6'-bromotryptophan modification.

In terms of tissue distribution, expressed by the venom duct.

The protein resides in the secreted. Functionally, causes hyperactivity, circular motion, convulsion, urination and death, when injected into 13- to 15-day-old mice. Causes gasping, backward swimming or swimming in a vertical direction and death, when intraperitoneally injected into goldfish. The protein is Conotoxin r11e of Conus radiatus (Rayed cone).